The sequence spans 158 residues: 2-C-methyl-D-erythritol 2,4-cyclodiphosphate synthase (158 aa).

A divalent metal cation-binding residues include D8 and H10. 4-CDP-2-C-methyl-D-erythritol 2-phosphate is bound by residues 8–10 (DVH) and 34–35 (HS). A divalent metal cation is bound at residue H42. Residues 56 to 58 (DIG), 61 to 65 (FPDTD), 100 to 106 (AQKPKML), 132 to 135 (TTEE), and F139 each bind 4-CDP-2-C-methyl-D-erythritol 2-phosphate.

Belongs to the IspF family. Homotrimer. It depends on a divalent metal cation as a cofactor.

The enzyme catalyses 4-CDP-2-C-methyl-D-erythritol 2-phosphate = 2-C-methyl-D-erythritol 2,4-cyclic diphosphate + CMP. It participates in isoprenoid biosynthesis; isopentenyl diphosphate biosynthesis via DXP pathway; isopentenyl diphosphate from 1-deoxy-D-xylulose 5-phosphate: step 4/6. Involved in the biosynthesis of isopentenyl diphosphate (IPP) and dimethylallyl diphosphate (DMAPP), two major building blocks of isoprenoid compounds. Catalyzes the conversion of 4-diphosphocytidyl-2-C-methyl-D-erythritol 2-phosphate (CDP-ME2P) to 2-C-methyl-D-erythritol 2,4-cyclodiphosphate (ME-CPP) with a corresponding release of cytidine 5-monophosphate (CMP). This Clostridium beijerinckii (strain ATCC 51743 / NCIMB 8052) (Clostridium acetobutylicum) protein is 2-C-methyl-D-erythritol 2,4-cyclodiphosphate synthase.